Consider the following 941-residue polypeptide: Cilia- and flagella-associated protein 69 (941 aa).

It localises to the cell projection. The protein resides in the cilium. The protein localises to the flagellum. Cilium- and flagellum-associated protein. In the olfactory epithelium, regulates the speed of activation and termination of the odor response and thus contributes to the robustness of olfactory transduction pathways. Required for sperm flagellum assembly and stability. The polypeptide is Cilia- and flagella-associated protein 69 (Callithrix jacchus (White-tufted-ear marmoset)).